We begin with the raw amino-acid sequence, 303 residues long: GTP cyclohydrolase FolE2 (303 aa).

It belongs to the GTP cyclohydrolase IV family.

It catalyses the reaction GTP + H2O = 7,8-dihydroneopterin 3'-triphosphate + formate + H(+). It functions in the pathway cofactor biosynthesis; 7,8-dihydroneopterin triphosphate biosynthesis; 7,8-dihydroneopterin triphosphate from GTP: step 1/1. Its function is as follows. Converts GTP to 7,8-dihydroneopterin triphosphate. The polypeptide is GTP cyclohydrolase FolE2 (Exiguobacterium sp. (strain ATCC BAA-1283 / AT1b)).